The following is a 498-amino-acid chain: Histidine--tRNA ligase (498 aa).

Belongs to the class-II aminoacyl-tRNA synthetase family. In terms of assembly, homodimer.

Its subcellular location is the cytoplasm. The catalysed reaction is tRNA(His) + L-histidine + ATP = L-histidyl-tRNA(His) + AMP + diphosphate + H(+). The protein is Histidine--tRNA ligase of Bartonella quintana (strain Toulouse) (Rochalimaea quintana).